The chain runs to 152 residues: Aspartate carbamoyltransferase regulatory chain (152 aa).

C108, C113, C137, and C140 together coordinate Zn(2+).

It belongs to the PyrI family. As to quaternary structure, contains catalytic and regulatory chains. Zn(2+) is required as a cofactor.

Involved in allosteric regulation of aspartate carbamoyltransferase. This is Aspartate carbamoyltransferase regulatory chain from Neisseria meningitidis serogroup A / serotype 4A (strain DSM 15465 / Z2491).